The chain runs to 375 residues: Homeobox protein Meis3 (375 aa).

The segment at 25–51 (PETVPAVPGPYGPHRPPQPLPPGLDSD) is disordered. Positions 31–46 (VPGPYGPHRPPQPLPP) are enriched in pro residues. Residues 96–179 (GGDVCSSDSF…PIDLVIEDRD (84 aa)) form the MEIS N-terminal domain. 2 disordered regions span residues 197–268 (PDQN…KRGI) and 329–348 (NRTG…GGYT). Residues 227–241 (SQSGDNSSDQGDGLD) are compositionally biased toward low complexity. A DNA-binding region (homeobox; TALE-type) is located at residues 262–324 (RNKKRGIFPK…NARRRIVQPM (63 aa)).

The protein belongs to the TALE/MEIS homeobox family.

Its subcellular location is the nucleus. Transcriptional regulator which directly modulates PDPK1 expression, thus promoting survival of pancreatic beta-cells. Also regulates expression of NDFIP1, BNIP3, and CCNG1. This chain is Homeobox protein Meis3 (MEIS3), found in Homo sapiens (Human).